The following is a 305-amino-acid chain: MKKWFIALAGLLLTVTLAGCGSQTVATTNGGKITESAYYSSLKGTSSGKQVLQQMILNKVLEKQYGDKVSKSAVTKQFDKYKSQYGSSFSSVLSQSGMTQSSLKTEIRSNLLLKEAVKDNVTVTDAQLKKQFKSYEPEVSVAHILVSKKSTAQTIIKDLKSTKSSDMTSEFTKLAKKYSTDTATKNKGGKLSSFDSTDTSLDSTFKKAAFKLKTGEYTATPVKTQYGYHVILMLKNPGKGTIKEHKAELTKQIIDNDMNDSTVLHNVVAKVLKKGNVSIKDNDLKNILSDYLSSSSSSSASSSSK.

A signal peptide spans 1-19 (MKKWFIALAGLLLTVTLAG). C20 is lipidated: N-palmitoyl cysteine. The S-diacylglycerol cysteine moiety is linked to residue C20. Residues 136-235 (EPEVSVAHIL…YGYHVILMLK (100 aa)) enclose the PpiC domain.

This sequence belongs to the PrsA family.

It is found in the cell membrane. The enzyme catalyses [protein]-peptidylproline (omega=180) = [protein]-peptidylproline (omega=0). Its function is as follows. Plays a major role in protein secretion by helping the post-translocational extracellular folding of several secreted proteins. In Levilactobacillus brevis (strain ATCC 367 / BCRC 12310 / CIP 105137 / JCM 1170 / LMG 11437 / NCIMB 947 / NCTC 947) (Lactobacillus brevis), this protein is Foldase protein PrsA.